A 2581-amino-acid chain; its full sequence is Highly reducing polyketide synthase sorA (2581 aa).

The 423-residue stretch at 14 to 436 (SEPIAIIGMS…GSNAHIILED (423 aa)) folds into the Ketosynthase family 3 (KS3) domain. Residues C187, H322, and H359 each act as for beta-ketoacyl synthase activity in the active site. The interval 574–868 (VFTGQGAQWN…VVEVGPHTAL (295 aa)) is malonyl-CoA:ACP transacylase (MAT) domain. Residues 966–1103 (HDLLGSIVEG…GLVSVELGES (138 aa)) are N-terminal hotdog fold. The segment at 966–1270 (HDLLGSIVEG…GFSYQSLGRS (305 aa)) is dehydratase (DH) domain. One can recognise a PKS/mFAS DH domain in the interval 966 to 1273 (HDLLGSIVEG…YQSLGRSTSL (308 aa)). H998 functions as the Proton acceptor; for dehydratase activity in the catalytic mechanism. The interval 1119–1273 (TRRILPADLF…YQSLGRSTSL (155 aa)) is C-terminal hotdog fold. D1184 (proton donor; for dehydratase activity) is an active-site residue. A methyltransferase (CMet) domain region spans residues 1461-1568 (LEVGAATGAI…SSLLKPGGTL (108 aa)). The tract at residues 1873–2184 (LKPDLLVFGD…AGDQIGKVVL (312 aa)) is enoyl reductase (ER)domain. The tract at residues 2207 to 2389 (VSYLIVGGSG…AVSIDLSVVN (183 aa)) is ketoreductase (KR) domain. One can recognise a Carrier domain in the interval 2497–2574 (DAVRVVGTAI…QLAIDVVDRS (78 aa)). S2534 is subject to O-(pantetheine 4'-phosphoryl)serine.

It participates in secondary metabolite biosynthesis. Its function is as follows. Highly reducing polyketide synthase; part of the gene cluster that mediates the biosynthesis of sorbicillinoids, a diverse group of yellow secondary metabolites that restrict growth of competing pathogenic fungi but not of bacteria. Sorbicillinoids biosynthesis requires the action of two PKSs. SorA iteratively combines three acetyl units and the growing chain is modified by the ketoacyl reductase subunit, and optional by the enoyl reductase subunit in the second cycle. The polyketide is then handed over to the PKS SorB, which adds three more acetyl units, and two methyl groups. SorB releases an aldehyde, which undergoes spontaneous cyclization resulting in the formation of sorbicillin or 2',3'-dihydrosorbicillin. The monooxygenase sorC oxidizes sorbicillin and 2',3'-dihydrosorbicillin to 2',3'-dihydrosorbicillinol and sorbicillinol, respectively. The oxidoreductase sorD further converts sorbicillinol into oxosorbicillinol. Sorbicillinol is the building block for the other sorbicillinoids such as disorbicillinol, bisvertinolon, and dihydrobisvertinolone. This Penicillium rubens (strain ATCC 28089 / DSM 1075 / NRRL 1951 / Wisconsin 54-1255) (Penicillium chrysogenum) protein is Highly reducing polyketide synthase sorA.